A 453-amino-acid polypeptide reads, in one-letter code: Putative sodium-coupled neutral amino acid transporter 11 (453 aa).

Residues 1 to 34 (MSYQQPQLRGPLQRETDPSDRESLVSGHEHGGKS) are disordered. Over residues 12 to 32 (LQRETDPSDRESLVSGHEHGG) the composition is skewed to basic and acidic residues. The next 11 membrane-spanning stretches (helical) occupy residues 39 to 59 (AVFN…PYSM), 66 to 86 (LGIL…VLLI), 106 to 126 (GFPG…IAMI), 152 to 172 (FISR…PLSL), 179 to 199 (LGKI…VVVT), 222 to 242 (AIQA…CFLV), 262 to 282 (ILVS…TFTG), 299 to 319 (VTFG…IECF), 337 to 357 (VFHV…SLLI), 359 to 379 (CLGI…IFII), and 399 to 419 (MACV…VMAI).

It belongs to the amino acid/polyamine transporter 2 family. As to expression, widely expressed.

The protein localises to the membrane. Putative sodium-dependent amino acid/proton antiporter. The protein is Putative sodium-coupled neutral amino acid transporter 11 (Slc38a11) of Rattus norvegicus (Rat).